A 1926-amino-acid chain; its full sequence is Rho GTPase-activating protein 21-A (1926 aa).

Residues 1 to 41 are disordered; that stretch reads MATRRAIVPEQQQEPSSPASEISKNKDGQEQSEMVSPMEEE. The span at 10–22 shows a compositional bias: polar residues; sequence EQQQEPSSPASEI. The 86-residue stretch at 77–162 folds into the PDZ domain; the sequence is HTSIKDEENG…TLELSVMPKD (86 aa). Disordered stretches follow at residues 211-236, 353-378, 416-487, 571-592, 640-704, and 868-905; these read VEVPPSGTSLAKQQSSRPVRTATTQP, PTAQAEGSPSPTNHYSSPGPHQQIDW, TDYN…RSES, QPTRQNSYRSPHPRPAVSDRSG, FQRK…DSDA, and GKLGLKQGSSLKGVQARENVPSSEDSESRKDSSSDVFS. 3 stretches are compositionally biased toward polar residues: residues 216–236, 353–372, and 416–429; these read SGTSLAKQQSSRPVRTATTQP, PTAQAEGSPSPTNHYSSPGP, and TDYNQMLPNHFSGQ. Positions 441–451 are enriched in low complexity; it reads QQSVQMRQRSV. Over residues 452–466 the composition is skewed to basic and acidic residues; the sequence is SQERLEDPVLMKEWP. Over residues 468–479 the composition is skewed to polar residues; the sequence is SASQDTLSSAVA. A compositionally biased stretch (polar residues) spans 640–669; it reads FQRKTQTESASGFQLDSVKTSMSASSSPPA. Positions 906-1019 constitute a PH domain; that stretch reads DSNKEGFLYF…WIKAIQENGN (114 aa). Over residues 1044–1064 the composition is skewed to polar residues; it reads MSSASNKSEQSPKAPRQTLSI. Positions 1044–1107 are disordered; that stretch reads MSSASNKSEQ…SPPKDKGSWR (64 aa). Basic and acidic residues predominate over residues 1083 to 1105; it reads PKQESERRLFSKDDISPPKDKGS. The region spanning 1126–1318 is the Rho-GAP domain; it reads VRLDDCPPAH…TLIQKHDWFF (193 aa). Disordered regions lie at residues 1330–1381, 1396–1416, 1512–1540, 1573–1598, 1626–1658, and 1827–1915; these read VHEE…SGKD, ASRKRKKPKDKPQPSSSEDEL, QMEESMSDSGTMLSNSSQASAQRSKPKVV, LDPNPISPEVQSVAESKGEEADDERS, RQHRSKEEDPPRNVQANAEGSPSCTEGSITPRL, and STSE…LSGT. A compositionally biased stretch (polar residues) spans 1512 to 1534; it reads QMEESMSDSGTMLSNSSQASAQR. 2 stretches are compositionally biased toward polar residues: residues 1639–1653 and 1866–1902; these read VQANAEGSPSCTEGS and TADIPTGSESPSLGTAPQSDDQMNGDSFQSKNKNNFS.

The protein localises to the golgi apparatus membrane. Its subcellular location is the cell junction. The protein resides in the cytoplasmic vesicle membrane. It is found in the cytoplasm. It localises to the cytoskeleton. Its function is as follows. GTPase-activating protein (GAP) for rhoa and cdc42. The chain is Rho GTPase-activating protein 21-A (arhgap21-a) from Xenopus laevis (African clawed frog).